A 344-amino-acid chain; its full sequence is DNA integrity scanning protein DisA (344 aa).

The 133-residue stretch at 1–133 (MALLAPGTPI…GRRYLIERPE (133 aa)) folds into the DAC domain. Residues Gly61 and 92-96 (TRHRT) each bind ATP.

This sequence belongs to the DisA family. In terms of assembly, homooctamer. The cofactor is Mg(2+).

The enzyme catalyses 2 ATP = 3',3'-c-di-AMP + 2 diphosphate. In terms of biological role, participates in a DNA-damage check-point. DisA forms globular foci that rapidly scan along the chromosomes searching for lesions. Functionally, also has diadenylate cyclase activity, catalyzing the condensation of 2 ATP molecules into cyclic di-AMP (c-di-AMP). c-di-AMP likely acts as a signaling molecule that may couple DNA integrity with a cellular process. In Cutibacterium acnes (strain DSM 16379 / KPA171202) (Propionibacterium acnes), this protein is DNA integrity scanning protein DisA.